Reading from the N-terminus, the 455-residue chain is Angiopoietin-related protein 3 (455 aa).

The signal sequence occupies residues 1–16; it reads MHTIKLFLFVVPLVIA. Positions 17–165 are sufficient to inhibit LPL lipase activity; sequence SRVDPDLSSF…QEHPEVTSLK (149 aa). The tract at residues 17–207 is sufficient to inhibit LIPG/EL phospholipase activity; it reads SRVDPDLSSF…EIEKQLRKTG (191 aa). A required for inhibition of LPL lipase activity region spans residues 32-56; the sequence is EPKSRFAMLDDVKILANGLLQLGHG. Residues 85–206 adopt a coiled-coil conformation; the sequence is LSLRTNEIKE…KEIEKQLRKT (122 aa). A glycan (N-linked (GlcNAc...) asparagine) is linked at N115. A disordered region spans residues 202–242; the sequence is QLRKTGIQEPSENSLSSKSRAPRTTPPLQLNETENTEQDDL. The span at 209-220 shows a compositional bias: polar residues; sequence QEPSENSLSSKS. O-linked (GlcNAc) threonine glycosylation occurs at T226. A glycan (N-linked (GlcNAc...) asparagine) is linked at N232. Positions 237 to 455 constitute a Fibrinogen C-terminal domain; sequence TEQDDLPADC…SSKMMLQPTT (219 aa). C246 and C274 form a disulfide bridge. N-linked (GlcNAc...) asparagine glycans are attached at residues N296 and N357. The cysteines at positions 394 and 408 are disulfide-linked.

In terms of assembly, interacts with ANGPTL8. Interacts with ITGB3. In terms of processing, in part proteolytically cleaved by proprotein convertases; proposed to be involved in activation. In primary hepatocytes is intracellularily predominantly processed by FURIN and extracellularily by FURIN and PCSK6/PACE4. In 18.5 dpc embryos 75% of protein is found to be processed compared to 25 % in adults. As to expression, predominantly expressed in liver, weakly expressed in kidney and lung. Expressed in podocytes (at protein level). Expressed in hypothalamic neurons (at protein level). Expressed in bone marrow sinusoidal endothelial cells (at protein level).

It is found in the secreted. The protein localises to the cell projection. Its subcellular location is the lamellipodium. In terms of biological role, acts in part as a hepatokine that is involved in regulation of lipid and glucose metabolism. Proposed to play a role in the trafficking of energy substrates to either storage or oxidative tissues in response to food intake. Has a stimulatory effect on plasma triglycerides (TG), which is achieved by suppressing plasma TG clearance via inhibition of LPL activity; the function seems to be specific for the feeding conditions. The inhibition of LPL activity appears to be an indirect mechanism involving recruitment of proprotein convertases PCSK6 and FURIN to LPL leading to cleavage and dissociation of LPL from the cell surface; the function does not require ANGPTL3 proteolytic cleavage but seems to be mediated by the N-terminal domain, and is not inhibited by GPIHBP1. Can inhibit endothelial lipase, causing increased plasma levels of high density lipoprotein (HDL) cholesterol and phospholipids; the cleaved N-terminal domain is more efficient than the uncleaved proprotein. Can bind to adipocytes to activate lipolysis, releasing free fatty acids and glycerol. Suppresses LPL specifically in oxidative tissues which is required to route very low density lipoprotein (VLDL)-TG to white adipose tissue (WAT) for storage in response to food; the function may involve cooperation with circulating, liver-derived ANGPTL8 and ANGPTL4 expression in WAT. Contributes to lower plasma levels of low density lipoprotein (LDL)-cholesterol by a mechanism that is independent of the canonical pathway implicating APOE and LDLR. May stimulate hypothalamic LPL activity. Functionally, involved in angiogenesis. Binds to endothelial cells via integrin alpha-V/beta-3 (ITGAV:ITGB3), activates FAK, MAPK and Akt signaling pathways and induces cell adhesion and cell migration. May increase the motility of podocytes. Secreted from podocytes, may modulate properties of glomerular endothelial cells involving integrin alpha-V/beta-3 and Akt signaling. May induce actin filament rearrangements in podocytes implicating integrin alpha-V/beta-3 and Rac1 activation. Binds to hematopoietic stem cells (HSC) and is involved in the regulation of HSC activity probably implicating down-regulation of IKZF1/IKAROS. The polypeptide is Angiopoietin-related protein 3 (Angptl3) (Mus musculus (Mouse)).